Consider the following 540-residue polypeptide: Chaperonin GroEL (540 aa).

Residues 30–33 (TLGP), K51, 87–91 (DGTTT), G415, and D495 each bind ATP.

This sequence belongs to the chaperonin (HSP60) family. Forms a cylinder of 14 subunits composed of two heptameric rings stacked back-to-back. Interacts with the co-chaperonin GroES.

It is found in the cytoplasm. The enzyme catalyses ATP + H2O + a folded polypeptide = ADP + phosphate + an unfolded polypeptide.. In terms of biological role, together with its co-chaperonin GroES, plays an essential role in assisting protein folding. The GroEL-GroES system forms a nano-cage that allows encapsulation of the non-native substrate proteins and provides a physical environment optimized to promote and accelerate protein folding. The protein is Chaperonin GroEL of Rhodothermus marinus (Rhodothermus obamensis).